The primary structure comprises 275 residues: Large ribosomal subunit protein uL2c (275 aa).

2 disordered regions span residues proline 29–arginine 60 and methionine 225–histidine 252. Basic residues predominate over residues serine 51–arginine 60.

It belongs to the universal ribosomal protein uL2 family. As to quaternary structure, part of the 50S ribosomal subunit.

The protein localises to the plastid. Its subcellular location is the chloroplast. This Chlorokybus atmophyticus (Soil alga) protein is Large ribosomal subunit protein uL2c (rpl2).